Here is a 140-residue protein sequence, read N- to C-terminus: Nucleoside diphosphate kinase (140 aa).

Positions 11, 59, 87, 93, 104, and 114 each coordinate ATP. Histidine 117 acts as the Pros-phosphohistidine intermediate in catalysis.

This sequence belongs to the NDK family. In terms of assembly, homotetramer. It depends on Mg(2+) as a cofactor.

The protein resides in the cytoplasm. The catalysed reaction is a 2'-deoxyribonucleoside 5'-diphosphate + ATP = a 2'-deoxyribonucleoside 5'-triphosphate + ADP. The enzyme catalyses a ribonucleoside 5'-diphosphate + ATP = a ribonucleoside 5'-triphosphate + ADP. Its function is as follows. Major role in the synthesis of nucleoside triphosphates other than ATP. The ATP gamma phosphate is transferred to the NDP beta phosphate via a ping-pong mechanism, using a phosphorylated active-site intermediate. In Rhizobium meliloti (strain 1021) (Ensifer meliloti), this protein is Nucleoside diphosphate kinase.